A 165-amino-acid polypeptide reads, in one-letter code: Crossover junction endodeoxyribonuclease RuvC (165 aa).

Active-site residues include aspartate 7, glutamate 66, and aspartate 138. Mg(2+) is bound by residues aspartate 7, glutamate 66, and aspartate 138.

It belongs to the RuvC family. In terms of assembly, homodimer which binds Holliday junction (HJ) DNA. The HJ becomes 2-fold symmetrical on binding to RuvC with unstacked arms; it has a different conformation from HJ DNA in complex with RuvA. In the full resolvosome a probable DNA-RuvA(4)-RuvB(12)-RuvC(2) complex forms which resolves the HJ. Requires Mg(2+) as cofactor.

Its subcellular location is the cytoplasm. The catalysed reaction is Endonucleolytic cleavage at a junction such as a reciprocal single-stranded crossover between two homologous DNA duplexes (Holliday junction).. In terms of biological role, the RuvA-RuvB-RuvC complex processes Holliday junction (HJ) DNA during genetic recombination and DNA repair. Endonuclease that resolves HJ intermediates. Cleaves cruciform DNA by making single-stranded nicks across the HJ at symmetrical positions within the homologous arms, yielding a 5'-phosphate and a 3'-hydroxyl group; requires a central core of homology in the junction. The consensus cleavage sequence is 5'-(A/T)TT(C/G)-3'. Cleavage occurs on the 3'-side of the TT dinucleotide at the point of strand exchange. HJ branch migration catalyzed by RuvA-RuvB allows RuvC to scan DNA until it finds its consensus sequence, where it cleaves and resolves the cruciform DNA. In Ruegeria pomeroyi (strain ATCC 700808 / DSM 15171 / DSS-3) (Silicibacter pomeroyi), this protein is Crossover junction endodeoxyribonuclease RuvC.